We begin with the raw amino-acid sequence, 383 residues long: 2-aminoethylphosphonate--pyruvate transaminase (383 aa).

Lys192 bears the N6-(pyridoxal phosphate)lysine mark.

This sequence belongs to the class-V pyridoxal-phosphate-dependent aminotransferase family. PhnW subfamily. In terms of assembly, homodimer. It depends on pyridoxal 5'-phosphate as a cofactor.

It carries out the reaction (2-aminoethyl)phosphonate + pyruvate = phosphonoacetaldehyde + L-alanine. Its function is as follows. Involved in phosphonate degradation. This Rhizobium meliloti (strain 1021) (Ensifer meliloti) protein is 2-aminoethylphosphonate--pyruvate transaminase.